The following is a 279-amino-acid chain: MTQFDKQYNSIIKDIINNGISDEEFDVRTKWDSDGTPAHTLSVISKQMRFDNSEVPILTTKKVAWKTAIKELLWIWQLKSNDVNDLNMMGVHIWDQWKQEDGTIGHAYGFQLGKKNRSLNGEKVDQVDYLLHQLKNNPSSRRHITMLWNPDELDAMALTPCVYETQWYVKHGKLHLEVRARSNDMALGNPFNVFQYNVLQRMIAQVTGYELGEYIFNIGDCHVYTRHIDNLKIQMEREQFEAPELWINPEVKDFYDFTIDDFKLINYKHGDKLLFEVAV.

141–142 (RR) is a dUMP binding site. Catalysis depends on cysteine 161, which acts as the Nucleophile. Residues 181–184 (RSND), asparagine 192, and 222–224 (HVY) contribute to the dUMP site. Aspartate 184 contacts (6R)-5,10-methylene-5,6,7,8-tetrahydrofolate. Alanine 278 is a binding site for (6R)-5,10-methylene-5,6,7,8-tetrahydrofolate.

The protein belongs to the thymidylate synthase family. Bacterial-type ThyA subfamily. Homodimer.

The protein localises to the cytoplasm. The catalysed reaction is dUMP + (6R)-5,10-methylene-5,6,7,8-tetrahydrofolate = 7,8-dihydrofolate + dTMP. The protein operates within pyrimidine metabolism; dTTP biosynthesis. Catalyzes the reductive methylation of 2'-deoxyuridine-5'-monophosphate (dUMP) to 2'-deoxythymidine-5'-monophosphate (dTMP) while utilizing 5,10-methylenetetrahydrofolate (mTHF) as the methyl donor and reductant in the reaction, yielding dihydrofolate (DHF) as a by-product. This enzymatic reaction provides an intracellular de novo source of dTMP, an essential precursor for DNA biosynthesis. This Bacillus subtilis (strain 168) protein is Thymidylate synthase 1.